Reading from the N-terminus, the 176-residue chain is Ribosome maturation factor RimM (176 aa).

A PRC barrel domain is found at 93–168; the sequence is DDEVYIEDIL…TIRITPPPGL (76 aa).

The protein belongs to the RimM family. In terms of assembly, binds ribosomal protein uS19.

Its subcellular location is the cytoplasm. An accessory protein needed during the final step in the assembly of 30S ribosomal subunit, possibly for assembly of the head region. Essential for efficient processing of 16S rRNA. May be needed both before and after RbfA during the maturation of 16S rRNA. It has affinity for free ribosomal 30S subunits but not for 70S ribosomes. In Oleidesulfovibrio alaskensis (strain ATCC BAA-1058 / DSM 17464 / G20) (Desulfovibrio alaskensis), this protein is Ribosome maturation factor RimM.